The following is a 270-amino-acid chain: Urease accessory protein UreD (270 aa).

Belongs to the UreD family. In terms of assembly, ureD, UreF and UreG form a complex that acts as a GTP-hydrolysis-dependent molecular chaperone, activating the urease apoprotein by helping to assemble the nickel containing metallocenter of UreC. The UreE protein probably delivers the nickel.

Its subcellular location is the cytoplasm. Functionally, required for maturation of urease via the functional incorporation of the urease nickel metallocenter. In Actinobacillus pleuropneumoniae serotype 7 (strain AP76), this protein is Urease accessory protein UreD.